Reading from the N-terminus, the 84-residue chain is Sulfur carrier protein TusA (84 aa).

The Cysteine persulfide intermediate role is filled by Cys-19.

The protein belongs to the sulfur carrier protein TusA family. Interacts with IscS.

The protein resides in the cytoplasm. It participates in tRNA modification. Its function is as follows. Sulfur carrier protein involved in sulfur trafficking in the cell. Part of a sulfur-relay system required for 2-thiolation during synthesis of 2-thiouridine of the modified wobble base 5-methylaminomethyl-2-thiouridine (mnm(5)s(2)U) in tRNA. Interacts with IscS and stimulates its cysteine desulfurase activity. Accepts an activated sulfur from IscS, which is then transferred to TusD, and thus determines the direction of sulfur flow from IscS to 2-thiouridine formation. Also appears to be involved in sulfur transfer for the biosynthesis of molybdopterin. This Yersinia pseudotuberculosis serotype O:1b (strain IP 31758) protein is Sulfur carrier protein TusA.